Reading from the N-terminus, the 131-residue chain is uncharacterized protein (131 aa).

This is an uncharacterized protein from Caenorhabditis elegans.